A 288-amino-acid polypeptide reads, in one-letter code: Probable sulfate transport system permease protein cysT (288 aa).

8 helical membrane passes run 2-22, 28-48, 77-97, 112-132, 149-169, 196-218, 227-247, and 257-277; these read IPLF…KFRF, LVLA…IFFL, FLTA…LAWV, TVDL…MTVF, IVFN…PFVV, TTFW…TLGF, SIVL…VLLF, and SATI…FFIN. The 205-residue stretch at 73–277 folds into the ABC transmembrane type-1 domain; the sequence is YGFTFLTALL…ISFTALFFIN (205 aa).

It belongs to the binding-protein-dependent transport system permease family. CysTW subfamily.

The protein localises to the plastid. The protein resides in the chloroplast membrane. Functionally, part of the ABC transporter complex cysAWTP (TC 3.A.1.6.1) involved in sulfate/thiosulfate import. Probably responsible for the translocation of the substrate across the membrane. The sequence is that of Probable sulfate transport system permease protein cysT (cysT) from Marchantia polymorpha (Common liverwort).